A 2009-amino-acid chain; its full sequence is Rootletin (2009 aa).

Coiled-coil stretches lie at residues 74–265 (EMAS…VTSD) and 346–438 (ASLH…LRLQ). Disordered stretches follow at residues 462-519 (ALSD…CSDS), 575-594 (RDQT…EAQR), 636-665 (ELKR…LERS), 1180-1225 (EAQR…ELRS), and 1448-1501 (GRVS…EAVR). Positions 463–484 (LSDTESGVQLSSSERTADTSDG) are enriched in polar residues. Coiled coils occupy residues 550–1058 (LGSV…LLAE) and 1091–1439 (LEME…GLRS). Positions 577-586 (QTAASAQAQE) are enriched in low complexity. A compositionally biased stretch (basic and acidic residues) spans 656–665 (ARARRELERS). Ser-1453, Ser-1463, and Ser-1469 each carry phosphoserine. Tyr-1475 carries the phosphotyrosine modification. Residues Ser-1476, Ser-1479, Ser-1483, Ser-1489, and Ser-1568 each carry the phosphoserine modification. Pro residues predominate over residues 1479 to 1494 (SQPPSPGLIASPAPPD). Coiled coils occupy residues 1498–1697 (EAVR…GTLQ) and 1744–1998 (HLQK…RSSA). The disordered stretch occupies residues 1957–2009 (QVQTERTLEARERAHRQRVSGLEEQVSTLKAQLHQELRRSSASVSLPPGTPEK).

This sequence belongs to the rootletin family. As to quaternary structure, homomer. Interacts with KLC3, NEK2 and the N-terminus of CEP250. Interacts with CEP44. In terms of processing, phosphorylated by NEK2 which may regulate its association with centrosomes. Highest expression detected in photoreceptor cells of retina. Expressed at lower levels in brain, trachea and kidney. Detected in all major ciliated epithelia. During embryonic development, enriched along the apical domains of neuroepithelium in brain ventricular zone, in primordia of retinal pigment epithelia and in neural retina.

Its subcellular location is the cytoplasm. It localises to the cytoskeleton. The protein resides in the microtubule organizing center. The protein localises to the centrosome. It is found in the centriole. Its subcellular location is the cilium basal body. Its function is as follows. Major structural component of the ciliary rootlet, a cytoskeletal-like structure in ciliated cells which originates from the basal body at the proximal end of a cilium and extends proximally toward the cell nucleus. Furthermore, is required for the correct positioning of the cilium basal body relative to the cell nucleus, to allow for ciliogenesis. Contributes to centrosome cohesion before mitosis. The polypeptide is Rootletin (Mus musculus (Mouse)).